The following is a 129-amino-acid chain: 3-aminoacrylate deaminase RutC (129 aa).

It belongs to the RutC family.

It catalyses the reaction (Z)-3-aminoacrylate + H2O + H(+) = 3-oxopropanoate + NH4(+). Its function is as follows. Involved in pyrimidine catabolism. Catalyzes the deamination of 3-aminoacrylate to malonic semialdehyde, a reaction that can also occur spontaneously. RutC may facilitate the reaction and modulate the metabolic fitness, rather than catalyzing essential functions. This chain is 3-aminoacrylate deaminase RutC, found in Yersinia enterocolitica serotype O:8 / biotype 1B (strain NCTC 13174 / 8081).